Reading from the N-terminus, the 468-residue chain is Argininosuccinate lyase (468 aa).

Belongs to the lyase 1 family. Argininosuccinate lyase subfamily.

The protein resides in the cytoplasm. It catalyses the reaction 2-(N(omega)-L-arginino)succinate = fumarate + L-arginine. The protein operates within amino-acid biosynthesis; L-arginine biosynthesis; L-arginine from L-ornithine and carbamoyl phosphate: step 3/3. In Sphingopyxis alaskensis (strain DSM 13593 / LMG 18877 / RB2256) (Sphingomonas alaskensis), this protein is Argininosuccinate lyase.